The sequence spans 166 residues: uncharacterized protein (166 aa).

Residues 1–58 (MSSEITEGDLQKFHDEHFNAKAVNLWNVAFAQNDRGGNSESANVEYTQSVERYPDGTI) are may interact with smn1.

As to quaternary structure, part of the core SMN complex at least composed of smn1, yip11/gem2, gem6, gem7 and gem8. Interacts with smn1; the interaction is direct. Interacts with gem7; the interaction is direct.

Its subcellular location is the cytoplasm. It is found in the nucleus. Functionally, the SMN complex catalyzes the assembly of small nuclear ribonucleoproteins (snRNPs), the building blocks of the spliceosome, and thereby plays an important role in the splicing of cellular pre-mRNAs. Most spliceosomal snRNPs contain a common set of Sm proteins SNRPB, SNRPD1, SNRPD2, SNRPD3, SNRPE, SNRPF and SNRPG that assemble in a heptameric protein ring on the Sm site of the small nuclear RNA to form the core snRNP (Sm core). In the cytosol, the Sm proteins SNRPD1, SNRPD2, SNRPE, SNRPF and SNRPG are trapped in an inactive 6S pICln-Sm complex by the chaperone CLNS1A that controls the assembly of the core snRNP. To assemble core snRNPs, the SMN complex accepts the trapped 5Sm proteins from CLNS1A forming an intermediate. Binding of snRNA inside 5Sm triggers eviction of the SMN complex, thereby allowing binding of SNRPD3 and SNRPB to complete assembly of the core snRNP. This is an uncharacterized protein from Schizosaccharomyces pombe (strain 972 / ATCC 24843) (Fission yeast).